The sequence spans 480 residues: Beta-glucosidase A (480 aa).

Glu177 (proton donor) is an active-site residue. The active-site Nucleophile is the Glu378.

Belongs to the glycosyl hydrolase 1 family.

It carries out the reaction Hydrolysis of terminal, non-reducing beta-D-glucosyl residues with release of beta-D-glucose.. This Enterobacter agglomerans (Erwinia herbicola) protein is Beta-glucosidase A (bglA).